The sequence spans 382 residues: MIRYDKYDKMVWEGCKNKITFHLSERETEIVFYLFFKYEVEILTETDLIKKIVRDRRFKNVKSITTLDENYSLIATEFFCEKLKELKEKGREEDISELLDELESYMENITSSFSSFGSGEGYKSYTDPKKKLELTEKLLKNNKLKEFMKVLGKFKRMAIKKYKTKIKHFSGEKYSINLGNNLINLLSSEYKNFAEEILFVDLLRRYNENKPLNYKILENNENCGDFVVCLDLSGSMRGNKEIWAKAIALCLMDISLKRNKRYISILFDDGVRDIKIYEKKVSFDEILEFASVFYGGGTNFEKPLREALKFNGDIVFITDGECEVSLEFLEKIKEEKQRRKIKIYSICINTKPTVSLRQISDVSVTIYELTSKTAEKVFDMLI.

This is an uncharacterized protein from Methanocaldococcus jannaschii (strain ATCC 43067 / DSM 2661 / JAL-1 / JCM 10045 / NBRC 100440) (Methanococcus jannaschii).